Reading from the N-terminus, the 514-residue chain is ATP synthase subunit alpha (514 aa).

170–177 serves as a coordination point for ATP; that stretch reads GDRQIGKT.

This sequence belongs to the ATPase alpha/beta chains family. In terms of assembly, F-type ATPases have 2 components, CF(1) - the catalytic core - and CF(0) - the membrane proton channel. CF(1) has five subunits: alpha(3), beta(3), gamma(1), delta(1), epsilon(1). CF(0) has three main subunits: a(1), b(2) and c(9-12). The alpha and beta chains form an alternating ring which encloses part of the gamma chain. CF(1) is attached to CF(0) by a central stalk formed by the gamma and epsilon chains, while a peripheral stalk is formed by the delta and b chains.

The protein localises to the cell inner membrane. The enzyme catalyses ATP + H2O + 4 H(+)(in) = ADP + phosphate + 5 H(+)(out). Functionally, produces ATP from ADP in the presence of a proton gradient across the membrane. The alpha chain is a regulatory subunit. This Pseudomonas putida (strain ATCC 47054 / DSM 6125 / CFBP 8728 / NCIMB 11950 / KT2440) protein is ATP synthase subunit alpha.